The sequence spans 141 residues: Large ribosomal subunit protein uL11 (141 aa).

Belongs to the universal ribosomal protein uL11 family. As to quaternary structure, part of the ribosomal stalk of the 50S ribosomal subunit. Interacts with L10 and the large rRNA to form the base of the stalk. L10 forms an elongated spine to which L12 dimers bind in a sequential fashion forming a multimeric L10(L12)X complex. Post-translationally, one or more lysine residues are methylated.

Forms part of the ribosomal stalk which helps the ribosome interact with GTP-bound translation factors. This Brevibacillus brevis (strain 47 / JCM 6285 / NBRC 100599) protein is Large ribosomal subunit protein uL11.